Here is a 470-residue protein sequence, read N- to C-terminus: Ribulose bisphosphate carboxylase large chain (470 aa).

Positions 115 and 165 each coordinate substrate. The active-site Proton acceptor is lysine 167. Substrate is bound at residue lysine 169. The Mg(2+) site is built by lysine 193, aspartate 195, and glutamate 196. Lysine 193 carries the post-translational modification N6-carboxylysine. Catalysis depends on histidine 286, which acts as the Proton acceptor. Arginine 287, histidine 319, and serine 371 together coordinate substrate.

Belongs to the RuBisCO large chain family. Type I subfamily. Heterohexadecamer of 8 large chains and 8 small chains. Forms a CsoS2-CsoS1-RuBisCO complex. It depends on Mg(2+) as a cofactor.

The protein resides in the carboxysome. The enzyme catalyses 2 (2R)-3-phosphoglycerate + 2 H(+) = D-ribulose 1,5-bisphosphate + CO2 + H2O. The catalysed reaction is D-ribulose 1,5-bisphosphate + O2 = 2-phosphoglycolate + (2R)-3-phosphoglycerate + 2 H(+). Functionally, ruBisCO catalyzes two reactions: the carboxylation of D-ribulose 1,5-bisphosphate, the primary event in carbon dioxide fixation, as well as the oxidative fragmentation of the pentose substrate in the photorespiration process. Both reactions occur simultaneously and in competition at the same active site. The chain is Ribulose bisphosphate carboxylase large chain from Prochlorococcus marinus (strain MIT 9313).